The sequence spans 330 residues: Taste receptor type 2 member 136 (330 aa).

Residues M1–A32 are Extracellular-facing. The chain crosses the membrane as a helical span at residues G33–V53. Residues T54–S73 are Cytoplasmic-facing. The helical transmembrane segment at L74–F94 threads the bilayer. The Extracellular segment spans residues H95 to T122. The chain crosses the membrane as a helical span at residues I123–L143. The Cytoplasmic segment spans residues K144–S149. The chain crosses the membrane as a helical span at residues V150 to T170. Residues V171–S201 lie on the Extracellular side of the membrane. Residues N183 and N195 are each glycosylated (N-linked (GlcNAc...) asparagine). A helical membrane pass occupies residues F202 to Y222. The Cytoplasmic segment spans residues S223 to K248. The chain crosses the membrane as a helical span at residues A249 to I269. Residues S270–H283 lie on the Extracellular side of the membrane. A helical membrane pass occupies residues L284–G304. The Cytoplasmic portion of the chain corresponds to N305–P330.

This sequence belongs to the G-protein coupled receptor T2R family.

It is found in the membrane. In terms of biological role, putative taste receptor which may play a role in the perception of bitterness. The chain is Taste receptor type 2 member 136 from Rattus norvegicus (Rat).